The sequence spans 250 residues: uncharacterized protein (250 aa).

This is an uncharacterized protein from Sulfolobus islandicus filamentous virus (isolate Iceland/Hveragerdi) (SIFV).